Here is a 426-residue protein sequence, read N- to C-terminus: Glutamate-1-semialdehyde 2,1-aminomutase (426 aa).

N6-(pyridoxal phosphate)lysine is present on Lys-265.

The protein belongs to the class-III pyridoxal-phosphate-dependent aminotransferase family. HemL subfamily. In terms of assembly, homodimer. Requires pyridoxal 5'-phosphate as cofactor.

It is found in the cytoplasm. It catalyses the reaction (S)-4-amino-5-oxopentanoate = 5-aminolevulinate. Its pathway is porphyrin-containing compound metabolism; protoporphyrin-IX biosynthesis; 5-aminolevulinate from L-glutamyl-tRNA(Glu): step 2/2. This is Glutamate-1-semialdehyde 2,1-aminomutase from Escherichia coli (strain K12 / DH10B).